The primary structure comprises 1671 residues: DNA polymerase (1671 aa).

The tract at residues 135–326 (LKMLAFDIET…KVTYELGKEF (192 aa)) is 3'-5' exonuclease. Residues 524–665 (LAGILLAEGT…VSKLLSQLGI (142 aa)) form the DOD-type homing endonuclease 1 domain. A disulfide bond links cysteine 788 and cysteine 802. In terms of domain architecture, DOD-type homing endonuclease 2 spans 1132 to 1265 (LLGYYVSEGY…LVLLLNSVGV (134 aa)). Cysteines 1403 and 1406 form a disulfide.

The protein belongs to the DNA polymerase type-B family. In terms of processing, undergoes a protein self splicing that involves a post-translational excision of the intervening region (intein) followed by peptide ligation.

The catalysed reaction is DNA(n) + a 2'-deoxyribonucleoside 5'-triphosphate = DNA(n+1) + diphosphate. Functionally, has high processivity, a high polymerization rate and high fidelity. In addition to polymerase activity, also exhibits 3' to 5' exonuclease activity. Intein encoded endonucleases are thought to mediate intein mobility by site-specific recombination initiated by endonuclease cleavage at the 'homing site' in genes that lack the intein. Upon expression in E.coli PI-PkoI recognizes the minimal sequence 5'-GATTTTAGATCCCTGTACC-3' and cuts after T-10. PI-PkoII recognizes the minimal sequence 5'-CAGCTACTACGGTTAC-3' and cuts after C-10. Given the high intracellular K(+) content (&gt;0.5 M), PI-PkoII is probably more active than PI-PkoI in vivo. This Thermococcus kodakarensis (strain ATCC BAA-918 / JCM 12380 / KOD1) (Pyrococcus kodakaraensis (strain KOD1)) protein is DNA polymerase (pol).